Here is a 176-residue protein sequence, read N- to C-terminus: Ribonuclease mitogillin (176 aa).

The N-terminal stretch at 1 to 27 (MVAIKNLFLLAATAVSVLAAPSPLDAR) is a signal peptide. Intrachain disulfides connect Cys32–Cys174 and Cys102–Cys158. His76 is a catalytic residue. Glu122 serves as the catalytic Proton acceptor. Catalysis depends on His163, which acts as the Proton donor.

This sequence belongs to the ribonuclease U2 family.

The protein localises to the secreted. In terms of biological role, this purine-specific ribonuclease cleaves 28S RNA in eukaryotic ribosomes, inhibits protein synthesis, and shows antitumor activity. This Aspergillus fumigatus (strain ATCC MYA-4609 / CBS 101355 / FGSC A1100 / Af293) (Neosartorya fumigata) protein is Ribonuclease mitogillin (mitF).